The following is a 238-amino-acid chain: Ribonuclease PH (238 aa).

Phosphate-binding positions include Arg-86 and 124–126 (GTR).

The protein belongs to the RNase PH family. In terms of assembly, homohexameric ring arranged as a trimer of dimers.

It catalyses the reaction tRNA(n+1) + phosphate = tRNA(n) + a ribonucleoside 5'-diphosphate. Its function is as follows. Phosphorolytic 3'-5' exoribonuclease that plays an important role in tRNA 3'-end maturation. Removes nucleotide residues following the 3'-CCA terminus of tRNAs; can also add nucleotides to the ends of RNA molecules by using nucleoside diphosphates as substrates, but this may not be physiologically important. Probably plays a role in initiation of 16S rRNA degradation (leading to ribosome degradation) during starvation. The chain is Ribonuclease PH from Shigella boydii serotype 18 (strain CDC 3083-94 / BS512).